We begin with the raw amino-acid sequence, 125 residues long: 14 kDa phosphohistidine phosphatase (125 aa).

A2 bears the N-acetylalanine mark. K21 is a binding site for substrate. H53 (proton acceptor) is an active-site residue. 94–96 (SMG) lines the substrate pocket.

Monomer.

It is found in the cytoplasm. The catalysed reaction is N(pros)-phospho-L-histidyl-[protein] + H2O = L-histidyl-[protein] + phosphate. It catalyses the reaction N(tele)-phospho-L-histidyl-[protein] + H2O = L-histidyl-[protein] + phosphate. In terms of biological role, exhibits phosphohistidine phosphatase activity. Functionally, may have a significant involvement in neuronal signaling. The chain is 14 kDa phosphohistidine phosphatase (PHPT1) from Oryctolagus cuniculus (Rabbit).